A 316-amino-acid chain; its full sequence is MSLQKSNKITPFLTFDRQKWAELRKSVPLKLTEQDLKPLLGFNEDLSLDEVSTIYLPLARLINYYIEENLKRQTVLHRFLDVASPKVPYIISIAGSVSVGKSTSARILQALLSQWPSERKVDLITTDGFLYPLTTLQEKDLLKRKGFPESYDIHRLIQFVSDIKSGKRHIQAPIYSHLTYDIIPDQYNVVDQPDIVILEGLNVLQSGMNYPSSPHNVFVSDFVDFSIYVDADEDLLKEWYIARFLKFRRSAFSDPNAYFHHYSKLSEQEAIRTASSIWDEINGLNLKQNILPSRERANLILIKGEDHAIQTVKLRK.

ATP is bound at residue 95–102 (GSVSVGKS).

Belongs to the prokaryotic pantothenate kinase family.

It localises to the cytoplasm. The catalysed reaction is (R)-pantothenate + ATP = (R)-4'-phosphopantothenate + ADP + H(+). It participates in cofactor biosynthesis; coenzyme A biosynthesis; CoA from (R)-pantothenate: step 1/5. This chain is Pantothenate kinase, found in Actinobacillus pleuropneumoniae serotype 7 (strain AP76).